We begin with the raw amino-acid sequence, 99 residues long: Cobalt transport protein CbiN (99 aa).

2 consecutive transmembrane segments (helical) span residues 6–26 (VLMI…YSGL) and 68–88 (SLLF…FFGY).

Belongs to the CbiN family. As to quaternary structure, forms an energy-coupling factor (ECF) transporter complex composed of an ATP-binding protein (A component, CbiO), a transmembrane protein (T component, CbiQ) and 2 possible substrate-capture proteins (S components, CbiM and CbiN) of unknown stoichimetry.

The protein resides in the cell membrane. The protein operates within cofactor biosynthesis; adenosylcobalamin biosynthesis. Its function is as follows. Part of the energy-coupling factor (ECF) transporter complex CbiMNOQ involved in cobalt import. This Methanococcus vannielii (strain ATCC 35089 / DSM 1224 / JCM 13029 / OCM 148 / SB) protein is Cobalt transport protein CbiN.